The sequence spans 429 residues: Large ribosomal subunit protein mL37 (429 aa).

The transit peptide at 1–29 directs the protein to the mitochondrion; it reads MALRPVVLRRAPAHSRGILTRPGPPRPRG. Residues 12 to 45 form a disordered region; that stretch reads PAHSRGILTRPGPPRPRGPLPRTPWTTRGPPPDQ. Residues 22 to 33 are compositionally biased toward pro residues; sequence PGPPRPRGPLPR.

The protein belongs to the mitochondrion-specific ribosomal protein mL37 family. As to quaternary structure, component of the mitochondrial ribosome large subunit (39S) which comprises a 16S rRNA and about 50 distinct proteins.

It localises to the mitochondrion. The chain is Large ribosomal subunit protein mL37 (MRPL37) from Gallus gallus (Chicken).